Here is a 156-residue protein sequence, read N- to C-terminus: 6,7-dimethyl-8-ribityllumazine synthase (156 aa).

5-amino-6-(D-ribitylamino)uracil-binding positions include Trp22, 56-58, and 80-82; these read AYE and AVI. Residue 85-86 participates in (2S)-2-hydroxy-3-oxobutyl phosphate binding; sequence DT. The Proton donor role is filled by His88. A 5-amino-6-(D-ribitylamino)uracil-binding site is contributed by Phe113. Arg127 lines the (2S)-2-hydroxy-3-oxobutyl phosphate pocket.

Belongs to the DMRL synthase family.

It carries out the reaction (2S)-2-hydroxy-3-oxobutyl phosphate + 5-amino-6-(D-ribitylamino)uracil = 6,7-dimethyl-8-(1-D-ribityl)lumazine + phosphate + 2 H2O + H(+). It participates in cofactor biosynthesis; riboflavin biosynthesis; riboflavin from 2-hydroxy-3-oxobutyl phosphate and 5-amino-6-(D-ribitylamino)uracil: step 1/2. Functionally, catalyzes the formation of 6,7-dimethyl-8-ribityllumazine by condensation of 5-amino-6-(D-ribitylamino)uracil with 3,4-dihydroxy-2-butanone 4-phosphate. This is the penultimate step in the biosynthesis of riboflavin. This Deinococcus deserti (strain DSM 17065 / CIP 109153 / LMG 22923 / VCD115) protein is 6,7-dimethyl-8-ribityllumazine synthase.